The chain runs to 102 residues: uncharacterized protein (102 aa).

The segment covering 1-13 (PSSSQALSVPSLS) has biased composition (low complexity). A disordered region spans residues 1-24 (PSSSQALSVPSLSSEKKTASPTCV).

This is an uncharacterized protein from Human cytomegalovirus (strain AD169) (HHV-5).